The following is a 728-amino-acid chain: Lanosterol synthase (728 aa).

One copy of the PFTB 1 repeat lies at Arg-117–Gly-159. The Proton donor role is filled by Asp-450. 2 PFTB repeats span residues Ile-561 to Gly-602 and Val-611 to Gly-657.

Belongs to the terpene cyclase/mutase family.

Its subcellular location is the lipid droplet. It localises to the endoplasmic reticulum membrane. It carries out the reaction (S)-2,3-epoxysqualene = lanosterol. The protein operates within terpene metabolism; lanosterol biosynthesis; lanosterol from farnesyl diphosphate: step 3/3. Its function is as follows. Lanosterol synthase; part of the third module of ergosterol biosynthesis pathway that includes the late steps of the pathway. ERG7 catalyzes the cyclization of (S)-2,3 oxidosqualene to lanosterol, a reaction that forms the sterol core. The third module or late pathway involves the ergosterol synthesis itself through consecutive reactions that mainly occur in the endoplasmic reticulum (ER) membrane. Firstly, the squalene synthase ERG9 catalyzes the condensation of 2 farnesyl pyrophosphate moieties to form squalene, which is the precursor of all steroids. Squalene synthase is crucial for balancing the incorporation of farnesyl diphosphate (FPP) into sterol and nonsterol isoprene synthesis. Secondly, the squalene epoxidase ERG1 catalyzes the stereospecific oxidation of squalene to (S)-2,3-epoxysqualene, which is considered to be a rate-limiting enzyme in steroid biosynthesis. Then, the lanosterol synthase ERG7 catalyzes the cyclization of (S)-2,3 oxidosqualene to lanosterol, a reaction that forms the sterol core. In the next steps, lanosterol is transformed to zymosterol through a complex process involving various demethylation, reduction and desaturation reactions. The lanosterol 14-alpha-demethylase ERG11 (also known as CYP51) catalyzes C14-demethylation of lanosterol to produce 4,4'-dimethyl cholesta-8,14,24-triene-3-beta-ol, which is critical for ergosterol biosynthesis. The C-14 reductase ERG24 reduces the C14=C15 double bond of 4,4-dimethyl-cholesta-8,14,24-trienol to produce 4,4-dimethyl-cholesta-8,24-dienol. 4,4-dimethyl-cholesta-8,24-dienol is substrate of the C-4 demethylation complex ERG25-ERG26-ERG27 in which ERG25 catalyzes the three-step monooxygenation required for the demethylation of 4,4-dimethyl and 4alpha-methylsterols, ERG26 catalyzes the oxidative decarboxylation that results in a reduction of the 3-beta-hydroxy group at the C-3 carbon to an oxo group, and ERG27 is responsible for the reduction of the keto group on the C-3. ERG28 has a role as a scaffold to help anchor ERG25, ERG26 and ERG27 to the endoplasmic reticulum and ERG29 regulates the activity of the iron-containing C4-methylsterol oxidase ERG25. Then, the sterol 24-C-methyltransferase ERG6 catalyzes the methyl transfer from S-adenosyl-methionine to the C-24 of zymosterol to form fecosterol. The C-8 sterol isomerase ERG2 catalyzes the reaction which results in unsaturation at C-7 in the B ring of sterols and thus converts fecosterol to episterol. The sterol-C5-desaturase ERG3 then catalyzes the introduction of a C-5 double bond in the B ring to produce 5-dehydroepisterol. The C-22 sterol desaturase ERG5 further converts 5-dehydroepisterol into ergosta-5,7,22,24(28)-tetraen-3beta-ol by forming the C-22(23) double bond in the sterol side chain. Finally, ergosta-5,7,22,24(28)-tetraen-3beta-ol is substrate of the C-24(28) sterol reductase ERG4 to produce ergosterol. The sequence is that of Lanosterol synthase from Candida albicans (strain SC5314 / ATCC MYA-2876) (Yeast).